The chain runs to 284 residues: Probable palmitoyltransferase ZDHHC24 (284 aa).

Residues 1 to 18 lie on the Cytoplasmic side of the membrane; the sequence is MGEPWAARGTEGAPARMP. The chain crosses the membrane as a helical span at residues 19–39; the sequence is VVFTALWAAVVVLELTYVMVL. Over 40–52 the chain is Extracellular; the sequence is GPGPPPLEPLARA. The helical transmembrane segment at 53–73 threads the bilayer; that stretch reads LQLALAAYQLLNLLGNMGLFL. At 74–137 the chain is on the cytoplasmic side; it reads RSDPSIRGVM…GRCVGFHNYR (64 aa). One can recognise a DHHC domain in the interval 94 to 144; that stretch reads AYCYQCQSQVPPRSGHCSACRVCILRRDHHCRLLGRCVGFHNYRPFLCLLL. The active-site S-palmitoyl cysteine intermediate is C124. The chain crosses the membrane as a helical span at residues 138–158; sequence PFLCLLLHAAGVLLHISVLLS. Residues 159–166 lie on the Extracellular side of the membrane; it reads PALSALLQ. The helical transmembrane segment at 167–187 threads the bilayer; sequence AHSALYTVALLLLPWLMLLTG. The Cytoplasmic portion of the chain corresponds to 188 to 195; it reads KVSLAQFA. A helical transmembrane segment spans residues 196–216; that stretch reads LAFVVDTCVAGALLCGAGLLF. Topologically, residues 217–284 are extracellular; the sequence is HGMLLLRGQT…TPTDVGLVTS (68 aa).

It belongs to the DHHC palmitoyltransferase family.

It localises to the membrane. It catalyses the reaction L-cysteinyl-[protein] + hexadecanoyl-CoA = S-hexadecanoyl-L-cysteinyl-[protein] + CoA. Its function is as follows. Probable palmitoyltransferase that could catalyze the addition of palmitate onto various protein substrates. This chain is Probable palmitoyltransferase ZDHHC24 (Zdhhc24), found in Rattus norvegicus (Rat).